We begin with the raw amino-acid sequence, 230 residues long: MISPIKNIKNVFPINTANTEYIVRNIYPRVEHGYFNESPNIYDKKYISGITRNMAQLKIEEFINEKSRRLNYMKTMYSPCPEDFQPISRDEASIPEGSWLTVISGKRPMGQFSVDSLYHPDLHALCELPEISCKIFPKENSDFLYIIVVFRNDSPQGELRTNRFIELYDIKREIMQVLRDESPELKSIKSEIIIAREMGELFSYASEEIDSYIKQMNDRFSQIKARMSVT.

Positions 49 to 52 are interaction with host proteins TAB2, TAB3 and ZRANB3; sequence GITR. S-adenosyl-L-methionine is bound by residues alanine 92, serine 98, arginine 107, glutamine 111, tyrosine 204, and glutamate 208.

The protein belongs to the NleE/OspZ family. Monomer.

The protein resides in the secreted. It localises to the host cytoplasm. It is found in the host nucleus. It carries out the reaction L-cysteinyl-[protein] + S-adenosyl-L-methionine = S-methyl-L-cysteinyl-[protein] + S-adenosyl-L-homocysteine + H(+). Its function is as follows. Cysteine methyltransferase effector that inhibits host cell NF-kappa-B activation by preventing nuclear translocation of host protein RELA/p65. Acts by mediating cysteine methylation of host proteins TAB2 and TAB3: methylation of a conserved cysteine residue of the RanBP2-type zinc finger (NZF) of TAB2 and TAB3 disrupts zinc-binding, thereby inactivating the ubiquitin chain-binding activity of TAB2 and TAB3, leading to NF-kappa-B inactivation. Also mediates cysteine methylation of host protein ZRANB3, inactivating its ability to bind ubiquitin chains. This Shigella boydii protein is Cysteine S-methyltransferase OspZ.